Reading from the N-terminus, the 356-residue chain is Thiamine thiazole synthase, chloroplastic (356 aa).

The N-terminal 51 residues, 1 to 51 (MAAMASTAFAPSVSSTTNKLFDSSFHGAPMSPSLLRLQPIKSSRPNNLSIS), are a transit peptide targeting the chloroplast. Substrate is bound by residues Ala-101, 121 to 122 (EQ), Gly-129, and Ala-194. A 2,3-didehydroalanine (Cys) modification is found at Cys-223. Substrate-binding positions include Asp-225, His-240, Met-292, and 302-304 (RMG).

The protein belongs to the THI4 family. Homooctamer. The cofactor is Fe cation. Post-translationally, during the catalytic reaction, a sulfide is transferred from Cys-223 to a reaction intermediate, generating a dehydroalanine residue.

It is found in the plastid. The protein localises to the chloroplast. It catalyses the reaction [ADP-thiazole synthase]-L-cysteine + glycine + NAD(+) = [ADP-thiazole synthase]-dehydroalanine + ADP-5-ethyl-4-methylthiazole-2-carboxylate + nicotinamide + 3 H2O + 2 H(+). Functionally, involved in biosynthesis of the thiamine precursor thiazole. Catalyzes the conversion of NAD and glycine to adenosine diphosphate 5-(2-hydroxyethyl)-4-methylthiazole-2-carboxylic acid (ADT), an adenylated thiazole intermediate. The reaction includes an iron-dependent sulfide transfer from a conserved cysteine residue of the protein to a thiazole intermediate. The enzyme can only undergo a single turnover, which suggests it is a suicide enzyme. May have additional roles in adaptation to various stress conditions and in DNA damage tolerance. This Citrus sinensis (Sweet orange) protein is Thiamine thiazole synthase, chloroplastic.